A 383-amino-acid polypeptide reads, in one-letter code: L-lactate dehydrogenase (383 aa).

One can recognise an FMN hydroxy acid dehydrogenase domain in the interval 1–380 (MIVSSTTDFR…NETILAERVP (380 aa)). A substrate-binding site is contributed by Y24. FMN contacts are provided by S106 and Q127. Y129 contacts substrate. T155 lines the FMN pocket. Substrate is bound at residue R164. K251 lines the FMN pocket. The Proton acceptor role is filled by H275. R278 is a binding site for substrate. 306–330 (DGGVRSGLDVVRMLALGARGVLIGR) is a binding site for FMN.

It belongs to the FMN-dependent alpha-hydroxy acid dehydrogenase family. FMN is required as a cofactor.

The protein resides in the cell inner membrane. The catalysed reaction is (S)-lactate + A = pyruvate + AH2. Catalyzes the conversion of L-lactate to pyruvate. Is coupled to the respiratory chain. The polypeptide is L-lactate dehydrogenase (Caulobacter vibrioides (strain ATCC 19089 / CIP 103742 / CB 15) (Caulobacter crescentus)).